The sequence spans 319 residues: Thioredoxin reductase (319 aa).

An FAD-binding site is contributed by 36–48 (EGFMAGGVAAGGQ). C144 and C147 are oxidised to a cystine. 289-298 (DVQDKVYRQA) lines the FAD pocket.

This sequence belongs to the class-II pyridine nucleotide-disulfide oxidoreductase family. In terms of assembly, homodimer. FAD serves as cofactor.

The catalysed reaction is [thioredoxin]-dithiol + NADP(+) = [thioredoxin]-disulfide + NADPH + H(+). This Dictyostelium discoideum (Social amoeba) protein is Thioredoxin reductase (trrA).